The sequence spans 383 residues: MTTLSSQAAPAVNAVIERLQAWPGEHRVAVGLSGGVDSSLTAALLRDAQWQVEGLTLWLMSGKGACCAEGLVDAAGLCEELEIPHHVVDSRDTFQQEIVQFLVQGYGDGITPLPCSRCNRAVKFGPMLDWAEKERGITRVATGHYARLRPNADGGRTQLLRGLDARKDQSYFLYDLPQAVLQRLIFPLGELTKPDTRAEAARLGLRTAEKPESQDLCLADHHGSMKAFLDAYLPERPGEIVLTDGRVVGQHDGIEHFTIGQRKGLGVAWSEPLHVVRLDGAMNQVVVAPRAEAARGDAVVGAVNWVSIDPPAEPLDVEVQVRYRSAPERARLTPLPPVESDHQAERPHRCRLDFAEEQFSITPGQAAVFYDGEVCLGGGLIQA.

Residues 31–38 and L57 contribute to the ATP site; that span reads GLSGGVDS. The active-site Nucleophile is the C118. C118 and C217 form a disulfide bridge. G143 contributes to the ATP binding site. The tract at residues 167 to 169 is interaction with tRNA; it reads KDQ. The Cysteine persulfide intermediate role is filled by C217. The interaction with tRNA stretch occupies residues 322 to 323; the sequence is RY.

It belongs to the MnmA/TRMU family.

The protein resides in the cytoplasm. It catalyses the reaction S-sulfanyl-L-cysteinyl-[protein] + uridine(34) in tRNA + AH2 + ATP = 2-thiouridine(34) in tRNA + L-cysteinyl-[protein] + A + AMP + diphosphate + H(+). Its function is as follows. Catalyzes the 2-thiolation of uridine at the wobble position (U34) of tRNA, leading to the formation of s(2)U34. The chain is tRNA-specific 2-thiouridylase MnmA from Synechococcus sp. (strain RCC307).